Consider the following 150-residue polypeptide: CCAAT/enhancer-binding protein gamma (150 aa).

Lysine 3 is covalently cross-linked (Glycyl lysine isopeptide (Lys-Gly) (interchain with G-Cter in SUMO2)). Residues 27-94 (GLQQVPQLVP…QKAQDTLQRV (68 aa)) are disordered. Residues 28 to 37 (LQQVPQLVPA) show a composition bias toward low complexity. Positions 56–72 (SPMDRNSDEYRQRRERN) are enriched in basic and acidic residues. The region spanning 62–125 (SDEYRQRRER…SVLKDLFLEH (64 aa)) is the bZIP domain. Positions 66–93 (RQRRERNNMAVKKSRLKSKQKAQDTLQR) are basic motif. Residues 97 to 118 (LKEENERLEAKIKLLTKELSVL) are leucine-zipper.

It belongs to the bZIP family. C/EBP subfamily. As to quaternary structure, binds DNA as a dimer and can form stable heterodimers with CEBPA and CEBPB. Interacts with ZNF638; this interaction increases transcriptional activation.

The protein localises to the nucleus. Transcription factor that binds to the promoter and the enhancer regions of target genes. Binds to the promoter and the enhancer of the alpha-1-fetoprotein gene. Binds to the enhancer element PRE-I (positive regulatory element-I) of the IL-4 gene. Binds to the promoter and the enhancer of the immunoglobulin heavy chain. Binds to GPE1, a cis-acting element in the G-CSF gene promoter. The sequence is that of CCAAT/enhancer-binding protein gamma (Cebpg) from Rattus norvegicus (Rat).